The following is a 655-amino-acid chain: Potassium voltage-gated channel subfamily A member 4 (655 aa).

Topologically, residues 1-306 are cytoplasmic; sequence MEVAMVSAES…LLFEYPESSS (306 aa). The interval 24–153 is disordered; it reads QARARERERL…SEEDHGDGCS (130 aa). The span at 36 to 50 shows a compositional bias: low complexity; that stretch reads SRAAAAAAVAAATAA. Over residues 81–90 the composition is skewed to basic and acidic residues; that stretch reads GSREEEATRT. Residues 91–100 show a composition bias toward basic residues; sequence EKKKKLHHRQ. S123 carries the phosphoserine modification. Residues 123-138 are compositionally biased toward acidic residues; the sequence is SEEEEDEEEEEEEEEE. The segment covering 139 to 150 has biased composition (basic and acidic residues); sequence GRFYYSEEDHGD. The helical transmembrane segment at 307–328 threads the bilayer; the sequence is PARGIAIVSVLVILISIVIFCL. The Extracellular portion of the chain corresponds to 329-372; the sequence is ETLPEFRDDRDLIMALSAGGHSRLLNDTSAPHLENSGHTIFNDP. The N-linked (GlcNAc...) asparagine glycan is linked to N354. Residues 373–394 form a helical membrane-spanning segment; it reads FFIVETVCIVWFSFEFVVRCFA. Residues 395 to 405 are Cytoplasmic-facing; it reads CPSQALFFKNI. Residues 406-426 traverse the membrane as a helical segment; that stretch reads MNIIDIVSILPYFITLGTDLA. The Extracellular segment spans residues 427-441; sequence QQQGGGNGQQQQAMS. Residues 442 to 462 traverse the membrane as a helical; Voltage-sensor segment; it reads FAILRIIRLVRVFRIFKLSRH. At 463–477 the chain is on the cytoplasmic side; that stretch reads SKGLQILGHTLRASM. Residues 464-477 are S4-S5 linker; the sequence is KGLQILGHTLRASM. Residues 478 to 499 traverse the membrane as a helical segment; the sequence is RELGLLIFFLFIGVILFSSAVY. Topologically, residues 500-513 are extracellular; that stretch reads FAEADEPTTHFQSI. The segment at residues 514–525 is an intramembrane region (helical); that stretch reads PDAFWWAVVTMT. Residues 526–531 carry the Selectivity filter motif; that stretch reads TVGYGD. An intramembrane segment occupies 526 to 533; it reads TVGYGDMK. At 534–540 the chain is on the extracellular side; the sequence is PITVGGK. Residues 541–569 form a helical membrane-spanning segment; that stretch reads IVGSLCAIAGVLTIALPVPVIVSNFNYFY. Residues 570–655 are Cytoplasmic-facing; that stretch reads HRETENEEQT…SNAKAVETDV (86 aa). S601 carries the phosphoserine; by PKA modification. Positions 631–642 are enriched in basic and acidic residues; the sequence is CQGKGDDSETDK. The disordered stretch occupies residues 631–655; it reads CQGKGDDSETDKNNCSNAKAVETDV. Residues 653–655 carry the PDZ-binding motif; sequence TDV.

The protein belongs to the potassium channel family. A (Shaker) (TC 1.A.1.2) subfamily. Kv1.4/KCNA4 sub-subfamily. Homotetramer and heterotetramer of potassium channel proteins. Interacts with KCNAB1 and KCNAB2. Interacts with DLG1, DLG2 and DLG4 via their PDZ domains. Interacts with SIGMAR1. Part of a complex containing KCNA1, KCNAB1 and LGI1. Detected in a complex with KCNA1. Interacts with KCNA2. Interacts (via cytoplasmic N-terminal domain) with KCNRG. N-glycosylated. Detected in brain (at protein level). Heart and brain.

The protein resides in the cell membrane. It is found in the cell projection. It localises to the axon. The enzyme catalyses K(+)(in) = K(+)(out). Functionally, voltage-gated potassium channel that mediates transmembrane potassium transport in excitable membranes. Forms tetrameric potassium-selective channels through which potassium ions pass in accordance with their electrochemical gradient. The channel alternates between opened and closed conformations in response to the voltage difference across the membrane. Can form functional homotetrameric channels and heterotetrameric channels that contain variable proportions of KCNA1, KCNA2, KCNA4, KCNA5, and possibly other family members as well; channel properties depend on the type of alpha subunits that are part of the channel. Channel properties are modulated by cytoplasmic beta subunits that regulate the subcellular location of the alpha subunits and promote rapid inactivation. In vivo, membranes probably contain a mixture of heteromeric potassium channel complexes, making it difficult to assign currents observed in intact tissues to any particular potassium channel family member. Homotetrameric KCNA4 forms a potassium channel that opens in response to membrane depolarization, followed by rapid spontaneous channel closure. Likewise, a heterotetrameric channel formed by KCNA1 and KCNA4 shows rapid inactivation. The chain is Potassium voltage-gated channel subfamily A member 4 (Kcna4) from Rattus norvegicus (Rat).